A 313-amino-acid chain; its full sequence is Cytochrome c biogenesis protein CcsA (313 aa).

8 helical membrane passes run 9 to 29 (ILTH…LITL), 44 to 64 (GIIV…ISSG), 71 to 91 (LYES…IPYF), 101 to 121 (IIGP…LTEI), 143 to 163 (MILG…LLVI), 217 to 237 (VISL…VWAN), 244 to 264 (WNWD…AIYL), and 278 to 298 (AIVA…VNLL).

This sequence belongs to the CcmF/CycK/Ccl1/NrfE/CcsA family. As to quaternary structure, may interact with Ccs1.

It localises to the plastid. The protein resides in the chloroplast thylakoid membrane. Required during biogenesis of c-type cytochromes (cytochrome c6 and cytochrome f) at the step of heme attachment. The polypeptide is Cytochrome c biogenesis protein CcsA (Nicotiana tomentosiformis (Tobacco)).